We begin with the raw amino-acid sequence, 123 residues long: Large ribosomal subunit protein uL22 (123 aa).

This sequence belongs to the universal ribosomal protein uL22 family. As to quaternary structure, part of the 50S ribosomal subunit.

Its function is as follows. This protein binds specifically to 23S rRNA; its binding is stimulated by other ribosomal proteins, e.g. L4, L17, and L20. It is important during the early stages of 50S assembly. It makes multiple contacts with different domains of the 23S rRNA in the assembled 50S subunit and ribosome. Functionally, the globular domain of the protein is located near the polypeptide exit tunnel on the outside of the subunit, while an extended beta-hairpin is found that lines the wall of the exit tunnel in the center of the 70S ribosome. The sequence is that of Large ribosomal subunit protein uL22 from Synechococcus sp. (strain JA-3-3Ab) (Cyanobacteria bacterium Yellowstone A-Prime).